The chain runs to 199 residues: ATP-dependent Clp protease proteolytic subunit (199 aa).

Ser97 functions as the Nucleophile in the catalytic mechanism. The active site involves His122.

This sequence belongs to the peptidase S14 family. As to quaternary structure, fourteen ClpP subunits assemble into 2 heptameric rings which stack back to back to give a disk-like structure with a central cavity, resembling the structure of eukaryotic proteasomes.

It is found in the cytoplasm. The enzyme catalyses Hydrolysis of proteins to small peptides in the presence of ATP and magnesium. alpha-casein is the usual test substrate. In the absence of ATP, only oligopeptides shorter than five residues are hydrolyzed (such as succinyl-Leu-Tyr-|-NHMec, and Leu-Tyr-Leu-|-Tyr-Trp, in which cleavage of the -Tyr-|-Leu- and -Tyr-|-Trp bonds also occurs).. Cleaves peptides in various proteins in a process that requires ATP hydrolysis. Has a chymotrypsin-like activity. Plays a major role in the degradation of misfolded proteins. This is ATP-dependent Clp protease proteolytic subunit from Pelobacter propionicus (strain DSM 2379 / NBRC 103807 / OttBd1).